Consider the following 237-residue polypeptide: MEKREELYRGKAKSVYKTDDADRLILLFRNDTSAFDGKRIEQLDRKGMVNNKFNAFIMQKLEAAGVPTQFDKLLGDNECLVKKLDMIPVECVVRNYAAGSLVKRLGVEEGMKLNPYTFELFLKDDAKGDPFINESHVVAFGWGTAEQLARMKELSLKVNEVLSKLFDDAGLLLVDFKLEFGVFSDGSIVLGDEFSPDGCRLWDKDTKKKMDKDRFRQGLGDVIEAYEEVAQRLGVPL.

It belongs to the SAICAR synthetase family.

The catalysed reaction is 5-amino-1-(5-phospho-D-ribosyl)imidazole-4-carboxylate + L-aspartate + ATP = (2S)-2-[5-amino-1-(5-phospho-beta-D-ribosyl)imidazole-4-carboxamido]succinate + ADP + phosphate + 2 H(+). The protein operates within purine metabolism; IMP biosynthesis via de novo pathway; 5-amino-1-(5-phospho-D-ribosyl)imidazole-4-carboxamide from 5-amino-1-(5-phospho-D-ribosyl)imidazole-4-carboxylate: step 1/2. The protein is Phosphoribosylaminoimidazole-succinocarboxamide synthase of Pseudomonas fluorescens (strain ATCC BAA-477 / NRRL B-23932 / Pf-5).